A 607-amino-acid chain; its full sequence is Vacuolar fusion protein MON1 homolog (607 aa).

Residues Met-1–Asp-14 are compositionally biased toward low complexity. 2 disordered regions span residues Met-1 to Ser-173 and Pro-463 to Val-486. Residues Asn-21–Glu-55 show a composition bias toward polar residues.

Belongs to the MON1/SAND family. Interacts with CCZ1A, CCZ1B and RABF2B. As to expression, widely expressed at stable levels.

It localises to the endosome. The protein resides in the prevacuolar compartment. Functionally, plays an important role in membrane trafficking through the secretory apparatus. In complex with CCZ1, acts as a guanine exchange factor (GEF) for RABG3F of the Rab7 protein family. Promotes the exchange of GDP to GTP, converting RABG3F from an inactive GDP-bound form into an active GTP-bound form. The RABG3F active form is involved in protein trafficking from prevacuolar compartments (PVCs) to vacuoles. May serve as a linker between Rab5 and Rab7 protein families in PVCs and mediate PVC maturation. This chain is Vacuolar fusion protein MON1 homolog, found in Arabidopsis thaliana (Mouse-ear cress).